The following is a 476-amino-acid chain: Protein transport protein Sec61 subunit alpha isoform 2 (476 aa).

The Cytoplasmic segment spans residues 1-33 (MGIKFLEVIKPFCAVLPEIQKPERKIQFREKVL). A helical membrane pass occupies residues 34–53 (WTAITLFIFLVCCQIPLFGI). Residues 54-76 (MSSDSADPFYWMRVILASNRGTL) are Lumenal-facing. A helical transmembrane segment spans residues 77–96 (MELGISPIVTSGLIMQLLAG). Topologically, residues 97–117 (AKIIEVGDTPKDRALFNGAQK) are cytoplasmic. Residues 118-138 (LFGMIITIGQAIVYVMTGMYG) traverse the membrane as a helical segment. Topologically, residues 139-144 (DPAEMG) are lumenal. Residues 145–165 (AGICLLIIIQLFVAGLIVLLL) form a helical membrane-spanning segment. Topologically, residues 166 to 172 (DELLQKG) are cytoplasmic. The helical transmembrane segment at 173 to 193 (YGLGSGISLFIATNICETIVW) threads the bilayer. Residues 194–240 (KAFSPTTINTGRGTEFEGAVIALFHLLATRTDKVRALREAFYRQNLP) are Lumenal-facing. Residues 241–261 (NLMNLIATVFVFAVVIYFQGF) traverse the membrane as a helical segment. The Cytoplasmic segment spans residues 262 to 288 (RVDLPIKSARYRGQYSSYPIKLFYTSN). The chain crosses the membrane as a helical span at residues 289 to 309 (IPIILQSALVSNLYVISQMLS). Topologically, residues 310–354 (VRFSGNFLVNLLGQWADVSGGGPARSYPVGGLCYYLSPPESMGAI) are lumenal. The chain crosses the membrane as a helical span at residues 355-375 (FEDPVHVVVYIIFMLGSCAFF). Topologically, residues 376–420 (SKTWIEVSGSSAKDVAKQLKEQQMVMRGHRDTSMVHELNRYIPTA) are cytoplasmic. Residues 421-441 (AAFGGLCIGALSVLADFLGAI) traverse the membrane as a helical segment. At 442 to 445 (GSGT) the chain is on the lumenal side. The chain crosses the membrane as a helical span at residues 446-462 (GILLAVTIIYQYFEIFV). Over 463 to 476 (KEQAEVGGMGALFF) the chain is Cytoplasmic.

This sequence belongs to the SecY/SEC61-alpha family. As to quaternary structure, the SEC61 channel-forming translocon complex consists of channel-forming core components SEC61A1, SEC61B and SEC61G and different auxiliary components such as SEC62 and SEC63.

Its subcellular location is the endoplasmic reticulum membrane. Component of SEC61 channel-forming translocon complex that mediates transport of signal peptide-containing precursor polypeptides across the endoplasmic reticulum (ER). Forms a ribosome receptor and a gated pore in the ER membrane, both functions required for cotranslational translocation of nascent polypeptides. The polypeptide is Protein transport protein Sec61 subunit alpha isoform 2 (SEC61A2) (Homo sapiens (Human)).